Consider the following 573-residue polypeptide: Delta 8-(E)-sphingolipid desaturase (573 aa).

In terms of domain architecture, Cytochrome b5 heme-binding spans 2-77 (SRVLSRRDIA…FKIWKIGRID (76 aa)). Heme-binding residues include histidine 37 and histidine 60. A helical transmembrane segment spans residues 228-248 (LFGISFYLLSLKWFAISAICL). The Histidine box-1 motif lies at 260-264 (HDAGH). A helical transmembrane segment spans residues 273 to 293 (VDNIIGMTVASWIGGLSLGWW). The Histidine box-2 motif lies at 297–301 (HDVHH). The next 3 membrane-spanning stretches (helical) occupy residues 353–372 (YLYY…LSWM), 393–413 (LAEL…KQMP), and 422–442 (VMIS…SHFA). The short motif at 481 to 485 (QVIHH) is the Histidine box-3 element.

Belongs to the fatty acid desaturase type 1 family.

Its subcellular location is the membrane. It carries out the reaction an N-acylsphing-4-enine + 2 Fe(II)-[cytochrome b5] + O2 + 2 H(+) = a (4E,8E)-4-sphinga-4,8-dienine ceramide + 2 Fe(III)-[cytochrome b5] + 2 H2O. It participates in lipid metabolism; sphingolipid metabolism. Delta(8)-fatty-acid desaturase which introduces a double bond at the 8-position in the long-chain base (LCB) of ceramides. Required for the formation of the di-unsaturated sphingoid base (E,E)-sphinga-4,8-dienine during glucosylceramide (GluCer) biosynthesis. The sequence is that of Delta 8-(E)-sphingolipid desaturase from Kluyveromyces lactis (Yeast).